Reading from the N-terminus, the 272-residue chain is Orotidine 5'-phosphate decarboxylase (272 aa).

The Proton donor role is filled by K95.

This sequence belongs to the OMP decarboxylase family. Type 2 subfamily.

It carries out the reaction orotidine 5'-phosphate + H(+) = UMP + CO2. It functions in the pathway pyrimidine metabolism; UMP biosynthesis via de novo pathway; UMP from orotate: step 2/2. In Cupriavidus taiwanensis (strain DSM 17343 / BCRC 17206 / CCUG 44338 / CIP 107171 / LMG 19424 / R1) (Ralstonia taiwanensis (strain LMG 19424)), this protein is Orotidine 5'-phosphate decarboxylase.